A 574-amino-acid chain; its full sequence is Proline--tRNA ligase (574 aa).

The protein belongs to the class-II aminoacyl-tRNA synthetase family. ProS type 1 subfamily. As to quaternary structure, homodimer.

The protein localises to the cytoplasm. It carries out the reaction tRNA(Pro) + L-proline + ATP = L-prolyl-tRNA(Pro) + AMP + diphosphate. Its function is as follows. Catalyzes the attachment of proline to tRNA(Pro) in a two-step reaction: proline is first activated by ATP to form Pro-AMP and then transferred to the acceptor end of tRNA(Pro). As ProRS can inadvertently accommodate and process non-cognate amino acids such as alanine and cysteine, to avoid such errors it has two additional distinct editing activities against alanine. One activity is designated as 'pretransfer' editing and involves the tRNA(Pro)-independent hydrolysis of activated Ala-AMP. The other activity is designated 'posttransfer' editing and involves deacylation of mischarged Ala-tRNA(Pro). The misacylated Cys-tRNA(Pro) is not edited by ProRS. The polypeptide is Proline--tRNA ligase (Desulfovibrio desulfuricans (strain ATCC 27774 / DSM 6949 / MB)).